A 259-amino-acid polypeptide reads, in one-letter code: Global transcriptional regulator CodY (259 aa).

Residues 1 to 155 (MDLLTRTRKI…GATVVGMEIL (155 aa)) are GAF domain. The segment at residues 203–222 (ASKIADRVGITRSVIVNALR) is a DNA-binding region (H-T-H motif). Serine 215 carries the post-translational modification Phosphoserine.

The protein belongs to the CodY family.

It localises to the cytoplasm. DNA-binding global transcriptional regulator which is involved in the adaptive response to starvation and acts by directly or indirectly controlling the expression of numerous genes in response to nutrient availability. During rapid exponential growth, CodY is highly active and represses genes whose products allow adaptation to nutrient depletion. The chain is Global transcriptional regulator CodY from Shouchella clausii (strain KSM-K16) (Alkalihalobacillus clausii).